The following is an 878-amino-acid chain: Phosphoenolpyruvate carboxylase (878 aa).

Catalysis depends on residues His-140 and Lys-545.

It belongs to the PEPCase type 1 family. Mg(2+) serves as cofactor.

The enzyme catalyses oxaloacetate + phosphate = phosphoenolpyruvate + hydrogencarbonate. Functionally, forms oxaloacetate, a four-carbon dicarboxylic acid source for the tricarboxylic acid cycle. The protein is Phosphoenolpyruvate carboxylase of Pseudomonas aeruginosa (strain ATCC 15692 / DSM 22644 / CIP 104116 / JCM 14847 / LMG 12228 / 1C / PRS 101 / PAO1).